Consider the following 257-residue polypeptide: Glutamate racemase (257 aa).

Substrate is bound by residues 12 to 13 (DS) and 44 to 45 (YG). Cysteine 75 acts as the Proton donor/acceptor in catalysis. A substrate-binding site is contributed by 76-77 (NT). Residue cysteine 185 is the Proton donor/acceptor of the active site. 186-187 (TH) is a binding site for substrate.

It belongs to the aspartate/glutamate racemases family.

It carries out the reaction L-glutamate = D-glutamate. The protein operates within cell wall biogenesis; peptidoglycan biosynthesis. Functionally, provides the (R)-glutamate required for cell wall biosynthesis. The polypeptide is Glutamate racemase (Clostridium botulinum (strain ATCC 19397 / Type A)).